A 533-amino-acid chain; its full sequence is Sterol 26-hydroxylase, mitochondrial (533 aa).

Residues 1–32 constitute a mitochondrion transit peptide; the sequence is MAVLSRMRLRWALLDTRVMGHGLCPQGARAKA. The tract at residues 38 to 58 is disordered; that stretch reads LRDHESTEGPGTGQDRPRLRS. Residues Lys-142 and Lys-375 each carry the N6-acetyllysine modification. The sterol-binding stretch occupies residues 386–400; the sequence is PLLKAVIKETLRLYP. Cys-479 is a heme binding site. 2 positions are modified to N6-acetyllysine: Lys-512 and Lys-523.

This sequence belongs to the cytochrome P450 family. As to quaternary structure, interacts with HSP70; this interaction is required for initial targeting to mitochondria. Requires heme as cofactor. As to expression, expressed in liver, kidney and ovary.

Its subcellular location is the mitochondrion inner membrane. The catalysed reaction is 5beta-cholestane-3alpha,7alpha,12alpha-triol + 6 reduced [adrenodoxin] + 3 O2 + 5 H(+) = (25R)-3alpha,7alpha,12alpha-trihydroxy-5beta-cholestan-26-oate + 6 oxidized [adrenodoxin] + 4 H2O. It catalyses the reaction cholestanol + 2 reduced [adrenodoxin] + O2 + 2 H(+) = (25R)-26-hydroxycholestanol + 2 oxidized [adrenodoxin] + H2O. It carries out the reaction (25R)-3beta-hydroxycholest-5-en-7-one-26-al + 2 reduced [adrenodoxin] + O2 + H(+) = (25R)-3beta-hydroxycholest-5-en-7-one-26-oate + 2 oxidized [adrenodoxin] + H2O. The enzyme catalyses (25R)-3beta,26-dihydroxycholest-5-en-7-one + 2 reduced [adrenodoxin] + O2 + 2 H(+) = (25R)-3beta-hydroxycholest-5-en-7-one-26-al + 2 oxidized [adrenodoxin] + 2 H2O. The catalysed reaction is 7-oxocholesterol + 2 reduced [adrenodoxin] + O2 + 2 H(+) = (25R)-3beta,26-dihydroxycholest-5-en-7-one + 2 oxidized [adrenodoxin] + H2O. It catalyses the reaction calciol + 2 reduced [adrenodoxin] + O2 + 2 H(+) = calcidiol + 2 oxidized [adrenodoxin] + H2O. It carries out the reaction (25R)-5beta-cholestane-3alpha,7alpha,12alpha,26-tetrol + 2 reduced [adrenodoxin] + O2 + 2 H(+) = (25R)-3alpha,7alpha,12alpha-trihydroxy-5beta-cholestan-26-al + 2 oxidized [adrenodoxin] + 2 H2O. The enzyme catalyses 2 reduced [adrenodoxin] + cholesterol + O2 + 2 H(+) = (25R)-cholest-5-ene-3beta,26-diol + 2 oxidized [adrenodoxin] + H2O. The catalysed reaction is (25R)-3beta,4beta-dihydroxycholest-5-en-26-al + 2 reduced [adrenodoxin] + O2 + H(+) = (25R)-3beta,4beta-dihydroxycholest-5-en-26-oate + 2 oxidized [adrenodoxin] + H2O. It catalyses the reaction (25R)-4beta,26-dihydroxycholesterol + 2 reduced [adrenodoxin] + O2 + 2 H(+) = (25R)-3beta,4beta-dihydroxycholest-5-en-26-al + 2 oxidized [adrenodoxin] + 2 H2O. It carries out the reaction 4beta-hydroxycholesterol + 2 reduced [adrenodoxin] + O2 + 2 H(+) = (25R)-4beta,26-dihydroxycholesterol + 2 oxidized [adrenodoxin] + H2O. The enzyme catalyses (25R)-3beta-hydroxy-5-cholesten-26-al + 2 reduced [adrenodoxin] + O2 + H(+) = (25R)-3beta-hydroxy-5-cholestenoate + 2 oxidized [adrenodoxin] + H2O. The catalysed reaction is (25R)-cholest-5-ene-3beta,26-diol + 2 reduced [adrenodoxin] + O2 + 2 H(+) = (25R)-3beta-hydroxy-5-cholesten-26-al + 2 oxidized [adrenodoxin] + 2 H2O. It catalyses the reaction (25R)-3alpha,7alpha,12alpha-trihydroxy-5beta-cholestan-26-al + 2 reduced [adrenodoxin] + O2 + H(+) = (25R)-3alpha,7alpha,12alpha-trihydroxy-5beta-cholestan-26-oate + 2 oxidized [adrenodoxin] + H2O. It carries out the reaction 5beta-cholestane-3alpha,7alpha,12alpha-triol + 2 reduced [adrenodoxin] + O2 + 2 H(+) = (25R)-5beta-cholestane-3alpha,7alpha,12alpha,26-tetrol + 2 oxidized [adrenodoxin] + H2O. It participates in hormone biosynthesis; cholecalciferol biosynthesis. It functions in the pathway steroid metabolism; cholesterol degradation. Its pathway is lipid metabolism; bile acid biosynthesis. Its function is as follows. Cytochrome P450 monooxygenase that catalyzes regio- and stereospecific hydroxylation of cholesterol and its derivatives. Hydroxylates (with R stereochemistry) the terminal methyl group of cholesterol side-chain in a three step reaction to yield at first a C26 alcohol, then a C26 aldehyde and finally a C26 acid. Regulates cholesterol homeostasis by catalyzing the conversion of excess cholesterol to bile acids via both the 'neutral' (classic) and the 'acid' (alternative) pathways. May also regulate cholesterol homeostasis via generation of active oxysterols, which act as ligands for NR1H2 and NR1H3 nuclear receptors, modulating the transcription of genes involved in lipid metabolism. Plays a role in cholestanol metabolism in the cerebellum. Similarly to cholesterol, hydroxylates cholestanol and may facilitate sterol diffusion through the blood-brain barrier to the systemic circulation for further degradation. Also hydroxylates retinal 7-ketocholesterol, a noxious oxysterol with pro-inflammatory and pro-apoptotic effects, and may play a role in its elimination from the retinal pigment epithelium. May play a redundant role in vitamin D biosynthesis. Catalyzes 25-hydroxylation of vitamin D3 that is required for its conversion to a functionally active form. The polypeptide is Sterol 26-hydroxylase, mitochondrial (Cyp27a1) (Rattus norvegicus (Rat)).